Reading from the N-terminus, the 341-residue chain is Probable GDP-mannose transporter 2 (341 aa).

Topologically, residues 1-11 (MSKHKHEWTES) are cytoplasmic. A helical transmembrane segment spans residues 12-32 (VANSGPASILSYCASSILMTV). Residues 33 to 46 (TNKFVVNLDNFNMN) lie on the Lumenal side of the membrane. A helical transmembrane segment spans residues 47–67 (FVMLFVQSLVCTVTLCILRIV). Residues 68–85 (GVANFRSLNRTDVKNWFP) lie on the Cytoplasmic side of the membrane. A helical transmembrane segment spans residues 86–106 (ISLLLVLMIYTSLKSLQYLAV). A topological domain (lumenal) is located at residue Pro-107. Residues 108-128 (IYTIFKNLTIILIAYGEVLFF) form a helical membrane-spanning segment. The Cytoplasmic portion of the chain corresponds to 129-139 (GGKVTSMELTS). A helical membrane pass occupies residues 140–160 (FIMMVLSSVVATWGDQQAIAI). The Lumenal segment spans residues 161-176 (KASSLEDLDQELVEST). Residues 177–197 (IFVLNPGYLWMFTNCISSALF) traverse the membrane as a helical segment. The Cytoplasmic segment spans residues 198-214 (VLIMRKRIRLTNFKDYD). Residues 215–235 (TMFYNNVLALPLLLVFSFIME) form a helical membrane-spanning segment. Residues 236-251 (DWSTKNLSVNLSADSL) are Lumenal-facing. Asn-241 and Asn-245 each carry an N-linked (GlcNAc...) asparagine glycan. Residues 252–272 (AAMVISGLMSVGISYCSGWCV) form a helical membrane-spanning segment. Residues 273–278 (RVTSST) are Cytoplasmic-facing. A helical membrane pass occupies residues 279 to 299 (TYSMVGALNKLPIALAGLVFF). Over 300 to 303 (DAPK) the chain is Lumenal. Residues 304–324 (NFLSFFSIFLGFLSGLLYAVA) traverse the membrane as a helical segment. The Cytoplasmic portion of the chain corresponds to 325 to 341 (KQKKIQQQKVLAATLEK).

Belongs to the TPT transporter family. SLC35D subfamily.

It localises to the golgi apparatus membrane. The protein localises to the cytoplasmic vesicle membrane. It is found in the endoplasmic reticulum membrane. Its function is as follows. Involved in the import of GDP-mannose from the cytoplasm into the Golgi lumen. This Saccharomyces cerevisiae (strain Lalvin EC1118 / Prise de mousse) (Baker's yeast) protein is Probable GDP-mannose transporter 2 (HVG1).